The chain runs to 845 residues: Translation initiation factor IF-2 (845 aa).

Basic and acidic residues-rich tracts occupy residues 139-198 (EAKR…EKPA) and 206-228 (FRSE…KELH). The interval 139–253 (EAKRQAAEEE…PQKAAPAAKH (115 aa)) is disordered. A tr-type G domain is found at 345-512 (SRAAVVTIMG…AILLQAEVME (168 aa)). The segment at 354–361 (GHVDHGKT) is G1. A GTP-binding site is contributed by 354–361 (GHVDHGKT). A G2 region spans residues 379–383 (GITQH). The segment at 400–403 (DTPG) is G3. GTP-binding positions include 400-404 (DTPGH) and 454-457 (NKID). Residues 454–457 (NKID) form a G4 region. The tract at residues 490-492 (SAK) is G5.

Belongs to the TRAFAC class translation factor GTPase superfamily. Classic translation factor GTPase family. IF-2 subfamily.

The protein localises to the cytoplasm. Functionally, one of the essential components for the initiation of protein synthesis. Protects formylmethionyl-tRNA from spontaneous hydrolysis and promotes its binding to the 30S ribosomal subunits. Also involved in the hydrolysis of GTP during the formation of the 70S ribosomal complex. This is Translation initiation factor IF-2 from Nitrosococcus oceani (strain ATCC 19707 / BCRC 17464 / JCM 30415 / NCIMB 11848 / C-107).